The chain runs to 224 residues: DNA repair and recombination protein RadB (224 aa).

Belongs to the eukaryotic RecA-like protein family. RadB subfamily.

In terms of biological role, involved in DNA repair and in homologous recombination. May regulate the cleavage reactions of the branch-structured DNA. Has a very weak ATPase activity that is not stimulated by DNA. Binds DNA but does not promote DNA strands exchange. The protein is DNA repair and recombination protein RadB of Methanoculleus marisnigri (strain ATCC 35101 / DSM 1498 / JR1).